The sequence spans 419 residues: tRNA (guanine-N(7)-)-methyltransferase non-catalytic subunit wuho (419 aa).

Residues 51–61 (STAEQQSAAAE) are compositionally biased toward low complexity. The disordered stretch occupies residues 51 to 75 (STAEQQSAAAETGGGSVVEGEEPKD). WD repeat units lie at residues 87 to 127 (APTV…AQLV), 174 to 213 (GHLS…DIHS), and 217 to 255 (GHKE…ELLR).

The protein belongs to the WD repeat TRM82 family. Forms a heterodimer with the catalytic subunit Mettl1. Interacts with mei-P26 and weakly interacts with bgcn; required for the function or formation of the mei-P26-bgcn-bam-sxl complex. Interacts with nanos; may be involved in mei-P26-dependent derepression of the BMP signaling pathway. Interacts with Myc; the interaction may be mediated by mei-P26 and may be involved in the regulation of ribosome biogenesis. As to expression, in testis, it is present at high level in hub cells, a niche for germline stem cells of testis. Ubiquitously expressed in all testicular cells throughout spermatogenesis. Ubiquitously expressed in all germline and somatic cells of the ovary.

The protein resides in the nucleus. It localises to the cytoplasm. It participates in tRNA modification; N(7)-methylguanine-tRNA biosynthesis. In terms of biological role, required for the Mettl1-dependent formation of N(7)-methylguanine at position 46 (m7G46) in tRNA. In the Mettl1-wuho methyltransferase complex, it is required to stabilize and induce conformational changes of the catalytic subunit. Required for binding of nanos mRNA and repression of translation by the mei-P26-bgcn-bam-sxl complex. May cooperate with mei-P26 and nanos to derepress the BMP signaling pathway. May cooperate with mei-P26 to suppress expression of a subset of microRNAs. May cooperate with mei-P26 to regulate bam expression levels in germline cells during gametogenesis. Required to promote mitosis to meiosis transition during gametogenesis. May regulate germline cell division in part by regulating ribosome biogenesis. The polypeptide is tRNA (guanine-N(7)-)-methyltransferase non-catalytic subunit wuho (Drosophila willistoni (Fruit fly)).